The chain runs to 749 residues: Catalase-peroxidase 2 (749 aa).

A signal peptide spans 1–27 (MFKRTIPLFAAFTLAISPSIFPNYAHA). Positions 107 to 229 (WHAAGTYRIY…LAATVMGLIY (123 aa)) form a cross-link, tryptophyl-tyrosyl-methioninium (Trp-Tyr) (with M-255). His-108 acts as the Proton acceptor in catalysis. Positions 229–255 (YVNPEGPNGVPDPLAAAEKIRETFGRM) form a cross-link, tryptophyl-tyrosyl-methioninium (Tyr-Met) (with W-107). His-270 is a binding site for heme b.

The protein belongs to the peroxidase family. Peroxidase/catalase subfamily. In terms of assembly, homodimer or homotetramer. It depends on heme b as a cofactor. Formation of the three residue Trp-Tyr-Met cross-link is important for the catalase, but not the peroxidase activity of the enzyme.

The enzyme catalyses H2O2 + AH2 = A + 2 H2O. The catalysed reaction is 2 H2O2 = O2 + 2 H2O. Bifunctional enzyme with both catalase and broad-spectrum peroxidase activity. This Legionella pneumophila subsp. pneumophila (strain Philadelphia 1 / ATCC 33152 / DSM 7513) protein is Catalase-peroxidase 2.